A 463-amino-acid chain; its full sequence is Glycine--tRNA ligase (463 aa).

The substrate site is built by R98 and E174. Residues 206-208 (RNE), 216-221 (FRTREF), 290-291 (EL), and 334-337 (GADR) contribute to the ATP site. 221–225 (FEQME) lines the substrate pocket. 330-334 (EPSLG) provides a ligand contact to substrate.

The protein belongs to the class-II aminoacyl-tRNA synthetase family. Homodimer.

The protein resides in the cytoplasm. It catalyses the reaction tRNA(Gly) + glycine + ATP = glycyl-tRNA(Gly) + AMP + diphosphate. Its function is as follows. Catalyzes the attachment of glycine to tRNA(Gly). In Staphylococcus epidermidis (strain ATCC 35984 / DSM 28319 / BCRC 17069 / CCUG 31568 / BM 3577 / RP62A), this protein is Glycine--tRNA ligase.